The primary structure comprises 285 residues: Bifunctional protein FolD (285 aa).

Residues 166–168, serine 191, and threonine 232 each bind NADP(+); that span reads GRS.

It belongs to the tetrahydrofolate dehydrogenase/cyclohydrolase family. As to quaternary structure, homodimer.

The catalysed reaction is (6R)-5,10-methylene-5,6,7,8-tetrahydrofolate + NADP(+) = (6R)-5,10-methenyltetrahydrofolate + NADPH. It carries out the reaction (6R)-5,10-methenyltetrahydrofolate + H2O = (6R)-10-formyltetrahydrofolate + H(+). Its pathway is one-carbon metabolism; tetrahydrofolate interconversion. In terms of biological role, catalyzes the oxidation of 5,10-methylenetetrahydrofolate to 5,10-methenyltetrahydrofolate and then the hydrolysis of 5,10-methenyltetrahydrofolate to 10-formyltetrahydrofolate. The chain is Bifunctional protein FolD from Chloroflexus aurantiacus (strain ATCC 29366 / DSM 635 / J-10-fl).